A 252-amino-acid polypeptide reads, in one-letter code: UPF0273 protein MK0039 (252 aa).

The KaiC domain occupies 4 to 248; it reads ERVSTGIPGM…VFVKERGEVR (245 aa). Position 31-38 (31-38) interacts with ATP; the sequence is GGPGTGKT.

Belongs to the UPF0273 family.

The chain is UPF0273 protein MK0039 from Methanopyrus kandleri (strain AV19 / DSM 6324 / JCM 9639 / NBRC 100938).